The primary structure comprises 799 residues: ATP-dependent RNA helicase DBP7 (799 aa).

Disordered stretches follow at residues 34 to 177 (KALR…RRIR) and 201 to 229 (DRIA…NAAL). 5 stretches are compositionally biased toward basic and acidic residues: residues 35 to 49 (ALRE…KKEQ), 56 to 66 (IEDRMKRREQD), 73 to 100 (KPYD…KSYD), 114 to 132 (EKYQ…ERWV), and 139 to 172 (NRRD…DGSL). A compositionally biased stretch (acidic residues) spans 208–220 (VQMEDEEEEEAEN). The Q motif motif lies at 233–261 (TTFSGLGCSQRLVDALVGMQLAKPTKIQR). The Helicase ATP-binding domain maps to 265–465 (PRLIQRERDL…KSTLKDADWV (201 aa)). ATP contacts are provided by residues 278–285 (AQTGSGKT) and 306–313 (TGLFAVIL). The DEAD box motif lies at 391 to 394 (DEGD). In terms of domain architecture, Helicase C-terminal spans 511 to 679 (DILQSSEKTN…NILAAGFGGK (169 aa)). The segment at 750 to 799 (KLGKKKDPEKIKVNKDGSLDETQARKKMLDRSRKHVYNSGESAMGGYVLE) is disordered. Residues 754-780 (KKDPEKIKVNKDGSLDETQARKKMLDR) show a composition bias toward basic and acidic residues.

Belongs to the DEAD box helicase family. DDX31/DBP7 subfamily.

It localises to the nucleus. It is found in the nucleolus. It carries out the reaction ATP + H2O = ADP + phosphate + H(+). ATP-binding RNA helicase involved in the biogenesis of 60S ribosomal subunits and is required for the normal formation of 25S and 5.8S rRNAs. The sequence is that of ATP-dependent RNA helicase DBP7 (DBP7) from Yarrowia lipolytica (strain CLIB 122 / E 150) (Yeast).